Consider the following 303-residue polypeptide: Protoheme IX farnesyltransferase 2 (303 aa).

Helical transmembrane passes span 29–49, 51–71, 96–118, 123–143, 150–170, 177–197, 223–243, 244–264, and 281–301; these read VVALMLLTVLVGMCLSVPGIV, LQPLVAGMAGIAMMAGSAAAF, ISTTKAVTFAVSLGSLGFVVLYT, LTAWLTFASLIGYALVYTAYL, NIVIGGLAGAMPPLLGWTAIT, ALLLVIIIFTWTPPHFWALAI, CILLYTILLAIACLLPVLVGM, CGPIYLVGSTVLSCGFIYKAW, and FSIYHLMVLFIVLLVDHYFWV.

This sequence belongs to the UbiA prenyltransferase family. Protoheme IX farnesyltransferase subfamily.

Its subcellular location is the cell inner membrane. It catalyses the reaction heme b + (2E,6E)-farnesyl diphosphate + H2O = Fe(II)-heme o + diphosphate. It participates in porphyrin-containing compound metabolism; heme O biosynthesis; heme O from protoheme: step 1/1. Converts heme B (protoheme IX) to heme O by substitution of the vinyl group on carbon 2 of heme B porphyrin ring with a hydroxyethyl farnesyl side group. The sequence is that of Protoheme IX farnesyltransferase 2 from Shewanella frigidimarina (strain NCIMB 400).